A 396-amino-acid polypeptide reads, in one-letter code: NADH-quinone oxidoreductase subunit D 1 (396 aa).

This sequence belongs to the complex I 49 kDa subunit family. In terms of assembly, NDH-1 is composed of 14 different subunits. Subunits NuoB, C, D, E, F, and G constitute the peripheral sector of the complex.

It localises to the cell inner membrane. It carries out the reaction a quinone + NADH + 5 H(+)(in) = a quinol + NAD(+) + 4 H(+)(out). Functionally, NDH-1 shuttles electrons from NADH, via FMN and iron-sulfur (Fe-S) centers, to quinones in the respiratory chain. The immediate electron acceptor for the enzyme in this species is believed to be ubiquinone. Couples the redox reaction to proton translocation (for every two electrons transferred, four hydrogen ions are translocated across the cytoplasmic membrane), and thus conserves the redox energy in a proton gradient. The polypeptide is NADH-quinone oxidoreductase subunit D 1 (Rhizobium etli (strain ATCC 51251 / DSM 11541 / JCM 21823 / NBRC 15573 / CFN 42)).